Here is a 406-residue protein sequence, read N- to C-terminus: Olfactomedin-like protein 3 (406 aa).

Residues 1-21 form the signal peptide; that stretch reads MGPSAPLLLLFFLSWTGPLQG. Residues 25 to 101 adopt a coiled-coil conformation; the sequence is HLVEYMERRL…REVDYLETQN (77 aa). An Olfactomedin-like domain is found at 134–401; sequence DCSYTVAQVR…QIVYKLEMKK (268 aa). Cysteine 135 and cysteine 328 form a disulfide bridge. 2 N-linked (GlcNAc...) asparagine glycosylation sites follow: asparagine 177 and asparagine 248.

The protein belongs to the OLFML3 family.

Its subcellular location is the secreted. Its function is as follows. Secreted scaffold protein that plays an essential role in dorsoventral patterning during early development. Stabilizes axial formation by restricting chordin (CHRD) activity on the dorsal side. Acts by facilitating the association between the tolloid proteases and their substrate chordin (CHRD), leading to enhance chordin (CHRD) degradation. May have matrix-related function involved in placental and embryonic development, or play a similar role in other physiological processes. This chain is Olfactomedin-like protein 3 (Olfml3), found in Mus musculus (Mouse).